The following is a 514-amino-acid chain: WD repeat-containing protein 26 (514 aa).

The CTLH domain maps to 9–84 (EHPSATKFRN…EYLEDGKVLE (76 aa)). 6 WD repeats span residues 206–245 (EHCN…HLLK), 252–291 (GHAY…GELR), 297–337 (SHED…DSWE), 377–416 (QEDH…LVRK), 419–461 (GVTQ…PIAE), and 464–504 (GHTR…DHQN).

In terms of assembly, forms homooligomers. Identified in the CTLH complex that contains GID4, RANBP9 and/or RANBP10, MKLN1, MAEA, RMND5A (or alternatively its paralog RMND5B), GID8, ARMC8, WDR26 and YPEL5. Within this complex, MAEA, RMND5A (or alternatively its paralog RMND5B), GID8, WDR26, and RANBP9 and/or RANBP10 form the catalytic core, while GID4, MKLN1, ARMC8 and YPEL5 have ancillary roles. Interacts with DDB1-CUL4A/B E3 ligase complexes. Forms a complex composed of at least WDR26, a G-beta:gamma unit, and PLCB2. Interacts with AXIN1.

It localises to the cytoplasm. Its subcellular location is the nucleus. It is found in the mitochondrion. Functionally, G-beta-like protein involved in cell signal transduction. Acts as a negative regulator in MAPK signaling pathway. Functions as a scaffolding protein to promote G beta:gamma-mediated PLCB2 plasma membrane translocation and subsequent activation in leukocytes. Core component of the CTLH E3 ubiquitin-protein ligase complex that selectively accepts ubiquitin from UBE2H and mediates ubiquitination and subsequent proteasomal degradation of the transcription factor HBP1. Acts as a negative regulator of the canonical Wnt signaling pathway through preventing ubiquitination of beta-catenin CTNNB1 by the beta-catenin destruction complex, thus negatively regulating CTNNB1 degradation. Protects cells from oxidative stress-induced apoptosis via the down-regulation of AP-1 transcriptional activity as well as by inhibiting cytochrome c release from mitochondria. Also protects cells by promoting hypoxia-mediated autophagy and mitophagy. The protein is WD repeat-containing protein 26 (Wdr26) of Rattus norvegicus (Rat).